Reading from the N-terminus, the 136-residue chain is Large ribosomal subunit protein uL16c (136 aa).

A disordered region spans residues 1–20; that stretch reads MLSPKRTRFRKQHRGRMKGK.

It belongs to the universal ribosomal protein uL16 family. As to quaternary structure, part of the 50S ribosomal subunit.

The protein localises to the plastid. It is found in the chloroplast. The sequence is that of Large ribosomal subunit protein uL16c from Agrostis stolonifera (Creeping bentgrass).